Here is a 195-residue protein sequence, read N- to C-terminus: Probable serine/threonine-protein kinase BUD32 homolog (195 aa).

The 195-residue stretch at 1–195 (MKVYLGGEAE…GRYVERVSMG (195 aa)) folds into the Protein kinase domain. Residue Lys-12 coordinates ATP. Asp-107 functions as the Proton acceptor in the catalytic mechanism.

This sequence belongs to the protein kinase superfamily. Tyr protein kinase family. BUD32 subfamily.

It is found in the cytoplasm. The catalysed reaction is L-seryl-[protein] + ATP = O-phospho-L-seryl-[protein] + ADP + H(+). The enzyme catalyses L-threonyl-[protein] + ATP = O-phospho-L-threonyl-[protein] + ADP + H(+). Could be involved in the formation of a threonylcarbamoyl group on adenosine at position 37 (t(6)A37) in tRNAs that read codons beginning with adenine. The chain is Probable serine/threonine-protein kinase BUD32 homolog from Archaeoglobus fulgidus (strain ATCC 49558 / DSM 4304 / JCM 9628 / NBRC 100126 / VC-16).